A 189-amino-acid polypeptide reads, in one-letter code: MKTFQLKGFRRDFLGKKAVKAYRKESLIPCVLYGGNENVIHFNVFRENLRKLVYTPDVFIVNLCIEEKLYLSILKEIQFHPVNDEILHVDFLRIFKNKPVIIEIPVVLEGLAEGIKAGGKLCSEMRKLKVKGFYKDFPERLVINVENLELGKTIQVGKLSFDNLELLNAKDNVVASVKLTRTARSTVSQ.

Belongs to the bacterial ribosomal protein bL25 family. CTC subfamily. In terms of assembly, part of the 50S ribosomal subunit; part of the 5S rRNA/L5/L18/L25 subcomplex. Contacts the 5S rRNA. Binds to the 5S rRNA independently of L5 and L18.

In terms of biological role, this is one of the proteins that binds to the 5S RNA in the ribosome where it forms part of the central protuberance. The polypeptide is Large ribosomal subunit protein bL25 (Azobacteroides pseudotrichonymphae genomovar. CFP2).